The chain runs to 283 residues: 1D-myo-inositol 2-acetamido-2-deoxy-alpha-D-glucopyranoside deacetylase (283 aa).

Zn(2+) is bound by residues H7, D10, and H148.

Belongs to the MshB deacetylase family. Zn(2+) serves as cofactor.

The enzyme catalyses 1D-myo-inositol 2-acetamido-2-deoxy-alpha-D-glucopyranoside + H2O = 1D-myo-inositol 2-amino-2-deoxy-alpha-D-glucopyranoside + acetate. Functionally, catalyzes the deacetylation of 1D-myo-inositol 2-acetamido-2-deoxy-alpha-D-glucopyranoside (GlcNAc-Ins) in the mycothiol biosynthesis pathway. The sequence is that of 1D-myo-inositol 2-acetamido-2-deoxy-alpha-D-glucopyranoside deacetylase from Gordonia bronchialis (strain ATCC 25592 / DSM 43247 / BCRC 13721 / JCM 3198 / KCTC 3076 / NBRC 16047 / NCTC 10667) (Rhodococcus bronchialis).